The following is a 92-amino-acid chain: Small ribosomal subunit protein uS19c (92 aa).

This sequence belongs to the universal ribosomal protein uS19 family.

It is found in the plastid. The protein resides in the chloroplast. In terms of biological role, protein S19 forms a complex with S13 that binds strongly to the 16S ribosomal RNA. The chain is Small ribosomal subunit protein uS19c (rps19) from Chlorella vulgaris (Green alga).